Reading from the N-terminus, the 300-residue chain is Bis(5'-nucleosyl)-tetraphosphatase, symmetrical (300 aa).

This sequence belongs to the Ap4A hydrolase family.

It carries out the reaction P(1),P(4)-bis(5'-adenosyl) tetraphosphate + H2O = 2 ADP + 2 H(+). Hydrolyzes diadenosine 5',5'''-P1,P4-tetraphosphate to yield ADP. This is Bis(5'-nucleosyl)-tetraphosphatase, symmetrical from Pseudomonas syringae pv. tomato (strain ATCC BAA-871 / DC3000).